We begin with the raw amino-acid sequence, 372 residues long: MKLLSLHVQDFRNLAAVELAPSPRATVLLGENGQGKTNLLEAIYFLTTLKPLRAVRLAELVRFGAEQGAVAGDFEGPGGVRRVAVQVAAGGRTATLDGKALGSGARLDDYFEGLASVCFSPDDLLLVKAGPDGRRRFLDRAAFNRWPAVLGEAREYVRALRARNAALRAGPAEVEASFREPLVRAGARILVRRRDLVAELAPRLQAAFAEISGPAAPEAHLAYRAAGGVDVEHPEAEVAARLAHALEARLERDREKGFTSAGPHMDDLVLALGGKGARLYGSQGQQRALVLALKIAEIENLRAALGRPPLLLLDDVSSELDPAKNRFLLGYLAALPAQAFLTSTDRRLIEPAAGPDTAFFEVRSGVVSPLVS.

ATP is bound at residue 30-37 (GENGQGKT).

The protein belongs to the RecF family.

The protein localises to the cytoplasm. Functionally, the RecF protein is involved in DNA metabolism; it is required for DNA replication and normal SOS inducibility. RecF binds preferentially to single-stranded, linear DNA. It also seems to bind ATP. The chain is DNA replication and repair protein RecF from Anaeromyxobacter dehalogenans (strain 2CP-1 / ATCC BAA-258).